Reading from the N-terminus, the 387-residue chain is Small ribosomal subunit biogenesis GTPase RsgA (387 aa).

The CP-type G domain occupies 112–273 (YDGLKPVAAN…LIDSPGVREF (162 aa)). Residues 159-162 (NKID) and 213-221 (GQSGVGKSS) contribute to the GTP site. Zn(2+) is bound by residues Cys-297, Cys-302, His-304, and Cys-310.

The protein belongs to the TRAFAC class YlqF/YawG GTPase family. RsgA subfamily. As to quaternary structure, monomer. Associates with 30S ribosomal subunit, binds 16S rRNA. Requires Zn(2+) as cofactor.

It localises to the cytoplasm. Functionally, one of several proteins that assist in the late maturation steps of the functional core of the 30S ribosomal subunit. Helps release RbfA from mature subunits. May play a role in the assembly of ribosomal proteins into the subunit. Circularly permuted GTPase that catalyzes slow GTP hydrolysis, GTPase activity is stimulated by the 30S ribosomal subunit. The chain is Small ribosomal subunit biogenesis GTPase RsgA from Vibrio cholerae serotype O1 (strain ATCC 39315 / El Tor Inaba N16961).